A 496-amino-acid polypeptide reads, in one-letter code: Aspartyl/glutamyl-tRNA(Asn/Gln) amidotransferase subunit B (496 aa).

It belongs to the GatB/GatE family. GatB subfamily. In terms of assembly, heterotrimer of A, B and C subunits.

The catalysed reaction is L-glutamyl-tRNA(Gln) + L-glutamine + ATP + H2O = L-glutaminyl-tRNA(Gln) + L-glutamate + ADP + phosphate + H(+). The enzyme catalyses L-aspartyl-tRNA(Asn) + L-glutamine + ATP + H2O = L-asparaginyl-tRNA(Asn) + L-glutamate + ADP + phosphate + 2 H(+). In terms of biological role, allows the formation of correctly charged Asn-tRNA(Asn) or Gln-tRNA(Gln) through the transamidation of misacylated Asp-tRNA(Asn) or Glu-tRNA(Gln) in organisms which lack either or both of asparaginyl-tRNA or glutaminyl-tRNA synthetases. The reaction takes place in the presence of glutamine and ATP through an activated phospho-Asp-tRNA(Asn) or phospho-Glu-tRNA(Gln). This Picosynechococcus sp. (strain ATCC 27264 / PCC 7002 / PR-6) (Agmenellum quadruplicatum) protein is Aspartyl/glutamyl-tRNA(Asn/Gln) amidotransferase subunit B.